The chain runs to 124 residues: Putative membrane protein insertion efficiency factor (124 aa).

Positions 1–12 (MCPQPHADHAIT) are enriched in basic and acidic residues. A disordered region spans residues 1–26 (MCPQPHADHAITRGDTGAAGGRNWSG).

This sequence belongs to the UPF0161 family.

The protein localises to the cell inner membrane. Could be involved in insertion of integral membrane proteins into the membrane. This chain is Putative membrane protein insertion efficiency factor, found in Rhizobium meliloti (strain 1021) (Ensifer meliloti).